A 1297-amino-acid polypeptide reads, in one-letter code: Phosphoribosylformylglycinamidine synthase (1297 aa).

Residues 307 to 318 and Ala-678 contribute to the ATP site; that span reads GASTGSGGEIRD. Mg(2+)-binding residues include Glu-718, Asn-722, and Asp-886. A Glutamine amidotransferase type-1 domain is found at 1044–1297; it reads MAILREQGVN…MFQNARKYFG (254 aa). Cys-1137 functions as the Nucleophile in the catalytic mechanism. Residues His-1262 and Glu-1264 contribute to the active site.

In the N-terminal section; belongs to the FGAMS family. Monomer.

Its subcellular location is the cytoplasm. It catalyses the reaction N(2)-formyl-N(1)-(5-phospho-beta-D-ribosyl)glycinamide + L-glutamine + ATP + H2O = 2-formamido-N(1)-(5-O-phospho-beta-D-ribosyl)acetamidine + L-glutamate + ADP + phosphate + H(+). Its pathway is purine metabolism; IMP biosynthesis via de novo pathway; 5-amino-1-(5-phospho-D-ribosyl)imidazole from N(2)-formyl-N(1)-(5-phospho-D-ribosyl)glycinamide: step 1/2. In terms of biological role, phosphoribosylformylglycinamidine synthase involved in the purines biosynthetic pathway. Catalyzes the ATP-dependent conversion of formylglycinamide ribonucleotide (FGAR) and glutamine to yield formylglycinamidine ribonucleotide (FGAM) and glutamate. This chain is Phosphoribosylformylglycinamidine synthase, found in Vibrio cholerae serotype O1 (strain ATCC 39315 / El Tor Inaba N16961).